Here is a 337-residue protein sequence, read N- to C-terminus: Putative 2-aminoethylphosphonate-binding periplasmic protein (337 aa).

A signal peptide spans 1–21 (MKLSRLALLSVFALASAPSWA).

This sequence belongs to the bacterial solute-binding protein 1 family.

It is found in the periplasm. Its function is as follows. Probably part of the PhnSTUV complex (TC 3.A.1.11.5) involved in 2-aminoethylphosphonate import. The protein is Putative 2-aminoethylphosphonate-binding periplasmic protein (phnS) of Salmonella typhimurium (strain LT2 / SGSC1412 / ATCC 700720).